The sequence spans 210 residues: Large ribosomal subunit protein bL25 (210 aa).

This sequence belongs to the bacterial ribosomal protein bL25 family. CTC subfamily. As to quaternary structure, part of the 50S ribosomal subunit; part of the 5S rRNA/L5/L18/L25 subcomplex. Contacts the 5S rRNA. Binds to the 5S rRNA independently of L5 and L18.

Functionally, this is one of the proteins that binds to the 5S RNA in the ribosome where it forms part of the central protuberance. This is Large ribosomal subunit protein bL25 from Saccharophagus degradans (strain 2-40 / ATCC 43961 / DSM 17024).